Consider the following 379-residue polypeptide: MSVRTLPLLFLNLGGEMLYVLDQRLRAQNIPGDKARKVLNDIISTMFNRKFMDELFKPQELYSKKALRTVYDRLAHASIMRLNQASMDKLYDLMTMAFKYQVLLCPRPKDVLLVTFNHLDAIKGFVQDSPTVIHQVDETFRQLSEVYGKLSEGEFQLIRQTLLNFFQDLHIRVSTFLKDKVQNSNGRFVLPVSGPVPWGTEVPGVIRVFSVKGKEVKKMKFRHGGDYVAAQKEGSFELYGDRVLKLGTNMYSASRPVETHMSATSKNAASRAQENIVPNPLAKEELNFLARLMGGMEIKKPSGPEPGFRLNLFTTDEEEEHAALSRPEELSYEVISIQATQDQQRNEELARIMGEFEITEQLEQNTSKGDDLLAMMDRL.

In terms of tissue distribution, predominantly expressed in testis.

The protein resides in the basal cell membrane. In terms of biological role, may be involved in drug clearance in the placenta. The chain is Protein OSCP1 (Oscp1) from Mus musculus (Mouse).